The following is a 197-amino-acid chain: uncharacterized protein (197 aa).

A helical transmembrane segment spans residues Ile-11–Val-31.

The protein resides in the membrane. This is an uncharacterized protein from Mycoplasma pneumoniae (strain ATCC 29342 / M129 / Subtype 1) (Mycoplasmoides pneumoniae).